A 117-amino-acid polypeptide reads, in one-letter code: Basic phospholipase A2 pseudexin B chain (117 aa).

7 disulfide bridges follow: Cys11/Cys71, Cys27/Cys117, Cys29/Cys45, Cys44/Cys98, Cys51/Cys91, Cys60/Cys84, and Cys78/Cys89. The Ca(2+) site is built by Tyr28, Gly30, and Gly32. Residue His48 is part of the active site. Asp49 is a binding site for Ca(2+). Residue Asp92 is part of the active site.

It belongs to the phospholipase A2 family. Group I subfamily. D49 sub-subfamily. The cofactor is Ca(2+). In terms of tissue distribution, expressed by the venom gland.

The protein localises to the secreted. It catalyses the reaction a 1,2-diacyl-sn-glycero-3-phosphocholine + H2O = a 1-acyl-sn-glycero-3-phosphocholine + a fatty acid + H(+). Its function is as follows. PLA2 catalyzes the calcium-dependent hydrolysis of the 2-acyl groups in 3-sn-phosphoglycerides. In Pseudechis porphyriacus (Red-bellied black snake), this protein is Basic phospholipase A2 pseudexin B chain.